We begin with the raw amino-acid sequence, 75 residues long: MKLTCVVIVAVLFLTACQLATADISGGMRKHRALRSTTKLSRSPFDCSSPGAFCGLVPCCDSCNVLGRCGSGLHV.

An N-terminal signal peptide occupies residues 1 to 22 (MKLTCVVIVAVLFLTACQLATA). Positions 23–42 (DISGGMRKHRALRSTTKLSR) are excised as a propeptide. Intrachain disulfides connect Cys47–Cys60, Cys54–Cys63, and Cys59–Cys69. Cys69 is modified (cysteine amide). Residues 70 to 75 (GSGLHV) constitute a propeptide that is removed on maturation.

This sequence belongs to the conotoxin O1 superfamily. In terms of tissue distribution, expressed by the venom duct.

It localises to the secreted. In Conus leopardus (Leopard cone), this protein is Conotoxin Leo-O3.